Consider the following 507-residue polypeptide: Cytochrome P450 71D2 (507 aa).

A run of 2 helical transmembrane segments spans residues 6-26 and 447-467; these read LPFN…LIYG and ICPG…LLLY. Residue C448 coordinates heme.

This sequence belongs to the cytochrome P450 family.

The protein localises to the membrane. This chain is Cytochrome P450 71D2, found in Catharanthus roseus (Madagascar periwinkle).